The following is a 321-amino-acid chain: Endochitinase 33 (321 aa).

The first 19 residues, 1-19 (MPSLTALASLLALVPSALA), serve as a signal peptide directing secretion. Residues 27 to 321 (QNIAVYWGQN…FETQVVNALR (295 aa)) enclose the GH18 domain. Glu-167 (proton donor) is an active-site residue.

The protein belongs to the glycosyl hydrolase 18 family. Chitinase class III subfamily. In terms of assembly, monomer.

It is found in the secreted. It carries out the reaction Random endo-hydrolysis of N-acetyl-beta-D-glucosaminide (1-&gt;4)-beta-linkages in chitin and chitodextrins.. Secreted chitinase involved in the degradation of chitin, a component of the cell walls of fungi and exoskeletal elements of some animals (including worms and arthropods). Plays a morphogenetic role during apical growth, cell division and differentiation (cell wall morphogenesis). May be involved in the degradation and further assimilation of phytopathogenic fungi, namely mycoparasitism, the major mechanism accounting for the antagonistic activity against phytopathogenic fungi displayed by Trichoderma. The polypeptide is Endochitinase 33 (chit33) (Trichoderma harzianum (Hypocrea lixii)).